Reading from the N-terminus, the 281-residue chain is Bifunctional protein FolD (281 aa).

Residues 165–167, threonine 192, and valine 233 each bind NADP(+); that span reads GRG.

This sequence belongs to the tetrahydrofolate dehydrogenase/cyclohydrolase family. As to quaternary structure, homodimer.

The enzyme catalyses (6R)-5,10-methylene-5,6,7,8-tetrahydrofolate + NADP(+) = (6R)-5,10-methenyltetrahydrofolate + NADPH. It carries out the reaction (6R)-5,10-methenyltetrahydrofolate + H2O = (6R)-10-formyltetrahydrofolate + H(+). It participates in one-carbon metabolism; tetrahydrofolate interconversion. In terms of biological role, catalyzes the oxidation of 5,10-methylenetetrahydrofolate to 5,10-methenyltetrahydrofolate and then the hydrolysis of 5,10-methenyltetrahydrofolate to 10-formyltetrahydrofolate. This is Bifunctional protein FolD from Mycobacterium avium (strain 104).